The following is a 416-amino-acid chain: MSELIEKAKQAQQASKQLAILTTEEKNRALKQIADQLLVERTYLIEENQKDIEAGQRAGISQTLLDRLLLTDERVQAMAEGVEQVIALDDPIGDQIDEFTRPNGLNIRQVRVPLGVIGMIYEARPNVTVDASVLCLKSGNAVLLRGSSSALHSNKALVSVIHRGLEAANVIPKDAVQLLEDTSRETAKEMFKLNDYLDVLIPRGGANLIQSVVKEASVPVLETGVGNCHVYIDESADPEMAVAIAVNAKTQRPSVCNAAETILVHSAWAKEHVSKLIEELRIKEVQIAGDEQIKAVAPFVKPADESDWGTEYLDLQVAMKIVNSVDEAIAHIDRYGSKHSEAIVSETDANVRKFLTNVDATTVYHNASTRFTDGFEFGFGAEIGISTQKLHARGPMGLRALTSSKYVVHGTGQIKK.

The protein belongs to the gamma-glutamyl phosphate reductase family.

The protein resides in the cytoplasm. It carries out the reaction L-glutamate 5-semialdehyde + phosphate + NADP(+) = L-glutamyl 5-phosphate + NADPH + H(+). It functions in the pathway amino-acid biosynthesis; L-proline biosynthesis; L-glutamate 5-semialdehyde from L-glutamate: step 2/2. Its function is as follows. Catalyzes the NADPH-dependent reduction of L-glutamate 5-phosphate into L-glutamate 5-semialdehyde and phosphate. The product spontaneously undergoes cyclization to form 1-pyrroline-5-carboxylate. In Halalkalibacterium halodurans (strain ATCC BAA-125 / DSM 18197 / FERM 7344 / JCM 9153 / C-125) (Bacillus halodurans), this protein is Gamma-glutamyl phosphate reductase.